Reading from the N-terminus, the 888-residue chain is Translation initiation factor IF-2 (888 aa).

Disordered regions lie at residues 96-122 (TTKQDESDAAGKRAAEDVSLRTAEAPE) and 158-302 (ELKE…SAPT). 2 stretches are compositionally biased toward basic and acidic residues: residues 98 to 114 (KQDESDAAGKRAAEDVS) and 158 to 167 (ELKEKQEKRR). Positions 181 to 206 (TQVQEPGSETAAVSGSVAATQPESTE) are enriched in polar residues. Positions 207–225 (TAAVTPSATITVTTQTTPA) are enriched in low complexity. 2 stretches are compositionally biased toward basic and acidic residues: residues 226–243 (AKERAPQKPAVKPEEKGE) and 253–269 (EAWKDEPVKRRESKARG). The tr-type G domain maps to 390 to 559 (SRAPVVTVMG…LLQAEVLELK (170 aa)). Positions 399-406 (GHVDHGKT) are G1. A GTP-binding site is contributed by 399 to 406 (GHVDHGKT). Residues 424-428 (GITQH) are G2. The G3 stretch occupies residues 445–448 (DTPG). GTP contacts are provided by residues 445–449 (DTPGH) and 499–502 (NKMD). Residues 499–502 (NKMD) are G4. The interval 535 to 537 (SAK) is G5.

Belongs to the TRAFAC class translation factor GTPase superfamily. Classic translation factor GTPase family. IF-2 subfamily.

The protein resides in the cytoplasm. Functionally, one of the essential components for the initiation of protein synthesis. Protects formylmethionyl-tRNA from spontaneous hydrolysis and promotes its binding to the 30S ribosomal subunits. Also involved in the hydrolysis of GTP during the formation of the 70S ribosomal complex. The protein is Translation initiation factor IF-2 of Nitrosomonas eutropha (strain DSM 101675 / C91 / Nm57).